The primary structure comprises 396 residues: Phosphoglycerate kinase (396 aa).

Residues 21-23 (DFN), arginine 36, 59-62 (HFDR), arginine 118, and arginine 151 contribute to the substrate site. Residues lysine 201, glutamate 323, and 353 to 356 (GGDT) contribute to the ATP site.

Belongs to the phosphoglycerate kinase family. In terms of assembly, monomer.

It localises to the cytoplasm. The enzyme catalyses (2R)-3-phosphoglycerate + ATP = (2R)-3-phospho-glyceroyl phosphate + ADP. It participates in carbohydrate degradation; glycolysis; pyruvate from D-glyceraldehyde 3-phosphate: step 2/5. In Caulobacter vibrioides (strain ATCC 19089 / CIP 103742 / CB 15) (Caulobacter crescentus), this protein is Phosphoglycerate kinase.